A 316-amino-acid polypeptide reads, in one-letter code: ATP synthase gamma chain (316 aa).

The protein belongs to the ATPase gamma chain family. As to quaternary structure, F-type ATPases have 2 components, CF(1) - the catalytic core - and CF(0) - the membrane proton channel. CF(1) has five subunits: alpha(3), beta(3), gamma(1), delta(1), epsilon(1). CF(0) has three main subunits: a, b and c.

The protein localises to the cellular thylakoid membrane. In terms of biological role, produces ATP from ADP in the presence of a proton gradient across the membrane. The gamma chain is believed to be important in regulating ATPase activity and the flow of protons through the CF(0) complex. This chain is ATP synthase gamma chain, found in Synechococcus sp. (strain CC9605).